The following is a 311-amino-acid chain: Ornithine carbamoyltransferase (311 aa).

Carbamoyl phosphate is bound by residues 54-57 (STRT), Q81, R105, and 132-135 (HPCQ). L-ornithine is bound by residues N164, D228, and 232-233 (SM). Carbamoyl phosphate is bound by residues 268-269 (CL) and R296.

This sequence belongs to the aspartate/ornithine carbamoyltransferase superfamily. OTCase family.

It is found in the cytoplasm. It catalyses the reaction carbamoyl phosphate + L-ornithine = L-citrulline + phosphate + H(+). It participates in amino-acid biosynthesis; L-arginine biosynthesis; L-arginine from L-ornithine and carbamoyl phosphate: step 1/3. In terms of biological role, reversibly catalyzes the transfer of the carbamoyl group from carbamoyl phosphate (CP) to the N(epsilon) atom of ornithine (ORN) to produce L-citrulline. The chain is Ornithine carbamoyltransferase from Renibacterium salmoninarum (strain ATCC 33209 / DSM 20767 / JCM 11484 / NBRC 15589 / NCIMB 2235).